Consider the following 349-residue polypeptide: Ribosomal RNA large subunit methyltransferase Cfr (349 aa).

The Proton acceptor role is filled by Glu-89. The Radical SAM core domain maps to 96 to 331 (KAGWESFCIS…VTVRSQFGID (236 aa)). A disulfide bridge connects residues Cys-103 and Cys-336. Positions 110, 114, and 117 each coordinate [4Fe-4S] cluster. S-adenosyl-L-methionine is bound by residues 156–157 (GE), Ser-187, 210–212 (SLH), and Asn-291. The S-methylcysteine intermediate role is filled by Cys-336.

It belongs to the radical SAM superfamily. RlmN family. Cfr subfamily. It depends on [4Fe-4S] cluster as a cofactor.

It localises to the cytoplasm. The enzyme catalyses adenosine(2503) in 23S rRNA + 2 reduced [2Fe-2S]-[ferredoxin] + 2 S-adenosyl-L-methionine = 8-methyladenosine(2503) in 23S rRNA + 5'-deoxyadenosine + L-methionine + 2 oxidized [2Fe-2S]-[ferredoxin] + S-adenosyl-L-homocysteine. Its function is as follows. Specifically methylates position 8 of adenine 2503 in 23S rRNA. Confers resistance to some classes of antibiotics. The sequence is that of Ribosomal RNA large subunit methyltransferase Cfr from Bacillus velezensis (strain DSM 23117 / BGSC 10A6 / LMG 26770 / FZB42) (Bacillus amyloliquefaciens subsp. plantarum).